The chain runs to 108 residues: Iron-sulfur cluster assembly protein CyaY (108 aa).

It belongs to the frataxin family.

Functionally, involved in iron-sulfur (Fe-S) cluster assembly. May act as a regulator of Fe-S biogenesis. This Burkholderia cenocepacia (strain ATCC BAA-245 / DSM 16553 / LMG 16656 / NCTC 13227 / J2315 / CF5610) (Burkholderia cepacia (strain J2315)) protein is Iron-sulfur cluster assembly protein CyaY.